Reading from the N-terminus, the 210-residue chain is Outer-membrane lipoprotein LolB (210 aa).

The N-terminal stretch at 1–26 (MSKLKIDTKRRFSLLIALVLIISLSS) is a signal peptide. A lipid anchor (N-palmitoyl cysteine) is attached at C27. C27 is lipidated: S-diacylglycerol cysteine.

Belongs to the LolB family. As to quaternary structure, monomer.

It is found in the cell outer membrane. Functionally, plays a critical role in the incorporation of lipoproteins in the outer membrane after they are released by the LolA protein. This chain is Outer-membrane lipoprotein LolB, found in Francisella tularensis subsp. holarctica (strain FTNF002-00 / FTA).